We begin with the raw amino-acid sequence, 347 residues long: Epimerase family protein SDR39U1 homolog, chloroplastic (347 aa).

The N-terminal 37 residues, 1–37 (MELLCSPTSLSSSFALSSALLVPRSFSMPGTRRFMVL), are a transit peptide targeting the chloroplast. NADP(+)-binding positions include 54–57 (TGFI), 76–77 (TR), 115–119 (LAGLP), and R136.

In terms of assembly, can form homodimers. In terms of tissue distribution, expressed in leaves, stems and flower buds.

Its subcellular location is the plastid. The protein resides in the chloroplast inner membrane. It is found in the chloroplast. Its function is as follows. Putative NADP-dependent oxidoreductase that acts as a positive regulator of chloroplast division. May play a role at an early stage of the division process. In Arabidopsis thaliana (Mouse-ear cress), this protein is Epimerase family protein SDR39U1 homolog, chloroplastic.